Reading from the N-terminus, the 327-residue chain is Tryptophan--tRNA ligase (327 aa).

ATP contacts are provided by residues 9–11 (QPS) and 17–18 (GN). The short motif at 10-18 (PSGDIHIGN) is the 'HIGH' region element. D132 is an L-tryptophan binding site. ATP is bound by residues 144 to 146 (GED), I183, and 192 to 196 (KMSKS). Residues 192-196 (KMSKS) carry the 'KMSKS' region motif.

Belongs to the class-I aminoacyl-tRNA synthetase family. Homodimer.

It is found in the cytoplasm. It carries out the reaction tRNA(Trp) + L-tryptophan + ATP = L-tryptophyl-tRNA(Trp) + AMP + diphosphate + H(+). Functionally, catalyzes the attachment of tryptophan to tRNA(Trp). The chain is Tryptophan--tRNA ligase from Caldanaerobacter subterraneus subsp. tengcongensis (strain DSM 15242 / JCM 11007 / NBRC 100824 / MB4) (Thermoanaerobacter tengcongensis).